Reading from the N-terminus, the 99-residue chain is uncharacterized protein (99 aa).

Helical transmembrane passes span 7–29 (FFIS…YTLY), 39–61 (FISS…ARYN), and 68–90 (FCNL…LWLL).

The protein resides in the cell membrane. This is an uncharacterized protein from Archaeoglobus fulgidus (strain ATCC 49558 / DSM 4304 / JCM 9628 / NBRC 100126 / VC-16).